Consider the following 664-residue polypeptide: UvrABC system protein B (664 aa).

Positions 25-170 constitute a Helicase ATP-binding domain; that stretch reads NSILLGNKYQ…FVGQRISIKE (146 aa). 38–45 contacts ATP; the sequence is GVTGSGKT. The Beta-hairpin signature appears at 91-114; the sequence is YYDYYQPESYVPSKDLFIEKEATI. Residues 429-595 enclose the Helicase C-terminal domain; that stretch reads QMEDLYIEIQ…TIVKKIQNIL (167 aa). In terms of domain architecture, UVR spans 622-657; it reads KKLIDKLKFELEEAVNDERFEDAIVLRDKIKELGSK.

This sequence belongs to the UvrB family. In terms of assembly, forms a heterotetramer with UvrA during the search for lesions. Interacts with UvrC in an incision complex.

It localises to the cytoplasm. Functionally, the UvrABC repair system catalyzes the recognition and processing of DNA lesions. A damage recognition complex composed of 2 UvrA and 2 UvrB subunits scans DNA for abnormalities. Upon binding of the UvrA(2)B(2) complex to a putative damaged site, the DNA wraps around one UvrB monomer. DNA wrap is dependent on ATP binding by UvrB and probably causes local melting of the DNA helix, facilitating insertion of UvrB beta-hairpin between the DNA strands. Then UvrB probes one DNA strand for the presence of a lesion. If a lesion is found the UvrA subunits dissociate and the UvrB-DNA preincision complex is formed. This complex is subsequently bound by UvrC and the second UvrB is released. If no lesion is found, the DNA wraps around the other UvrB subunit that will check the other stand for damage. In Borreliella afzelii (strain PKo) (Borrelia afzelii), this protein is UvrABC system protein B.